The following is a 258-amino-acid chain: MKCFQKLYIFILILIVLMAGCESNKITGDSKETQIKKSFAKTLDVYPTKNLEDFYDREGYRDGEFKKGDKGKWVIRSEITTELKNENMVSKGMVIRLNRNSRTCTGEYFVRIVKEDSEGKVYSDERKYPVKMENNKIIPLKPIDDEKVKKEIEEFKFFVQYGNFKELENYKEDEVSYNPEVPIYSAKYQLKNSDYNVEQLRKRYNIPTKKAPKLLLKGSGNLKDSSVGYKNIEFTFIENKEENIYFTDSIYFNPSVDK.

An N-terminal signal peptide occupies residues 1-20 (MKCFQKLYIFILILIVLMAG). The N-palmitoyl cysteine moiety is linked to residue cysteine 21. Cysteine 21 carries S-diacylglycerol cysteine lipidation.

It belongs to the staphylococcal tandem lipoprotein family.

The protein resides in the cell membrane. This is an uncharacterized protein from Staphylococcus aureus (strain bovine RF122 / ET3-1).